The chain runs to 284 residues: Shikimate dehydrogenase (NADP(+)) (284 aa).

Shikimate contacts are provided by residues 20–22 and Ser67; that span reads SIS. The active-site Proton acceptor is Lys71. Asp83 contributes to the NADP(+) binding site. 2 residues coordinate shikimate: Asn92 and Asp107. Residues 129–133 and Ile227 contribute to the NADP(+) site; that span reads GAGGA. Residue Tyr229 participates in shikimate binding. Position 250 (Gly250) interacts with NADP(+).

The protein belongs to the shikimate dehydrogenase family. In terms of assembly, homodimer.

The enzyme catalyses shikimate + NADP(+) = 3-dehydroshikimate + NADPH + H(+). It participates in metabolic intermediate biosynthesis; chorismate biosynthesis; chorismate from D-erythrose 4-phosphate and phosphoenolpyruvate: step 4/7. In terms of biological role, involved in the biosynthesis of the chorismate, which leads to the biosynthesis of aromatic amino acids. Catalyzes the reversible NADPH linked reduction of 3-dehydroshikimate (DHSA) to yield shikimate (SA). The polypeptide is Shikimate dehydrogenase (NADP(+)) (Streptococcus pneumoniae (strain 70585)).